The following is a 155-amino-acid chain: Ribonuclease H (155 aa).

Residues 1-146 (MPELFAYTDG…ADELARAGMK (146 aa)) form the RNase H type-1 domain. Asp-9, Glu-52, Asp-74, and Asp-138 together coordinate Mg(2+).

Belongs to the RNase H family. As to quaternary structure, monomer. Mg(2+) serves as cofactor.

The protein resides in the cytoplasm. The enzyme catalyses Endonucleolytic cleavage to 5'-phosphomonoester.. Functionally, endonuclease that specifically degrades the RNA of RNA-DNA hybrids. The protein is Ribonuclease H of Ruegeria pomeroyi (strain ATCC 700808 / DSM 15171 / DSS-3) (Silicibacter pomeroyi).